The chain runs to 326 residues: BTB/POZ domain-containing protein At1g21780 (326 aa).

Residues threonine 161–phenylalanine 228 enclose the BTB domain.

As to quaternary structure, homodimer. Interacts with CUL3A and CUL3B.

The protein operates within protein modification; protein ubiquitination. May act as a substrate-specific adapter of an E3 ubiquitin-protein ligase complex (CUL3-RBX1-BTB) which mediates the ubiquitination and subsequent proteasomal degradation of target proteins. The chain is BTB/POZ domain-containing protein At1g21780 from Arabidopsis thaliana (Mouse-ear cress).